The primary structure comprises 1770 residues: Transposon Ty2-OR2 Gag-Pol polyprotein (1770 aa).

2 disordered regions span residues 1 to 88 (MESQ…YQQH) and 359 to 449 (QHSE…SNDE). Composition is skewed to polar residues over residues 19–39 (ASVT…SASN) and 49–60 (KVNSQEETTPGT). The interval 295–397 (ENNINVSDRL…SSKPRAAKAH (103 aa)) is RNA-binding. Low complexity predominate over residues 369–381 (TSPNTTNTKVTTR). Polar residues-rich tracts occupy residues 399-408 (IATSSKFSRV) and 415-435 (ESTV…GQQQ). Asp-457 serves as the catalytic For protease activity; shared with dimeric partner. The tract at residues 579–636 (NVNKSKSVNKYPYPLIHRMLGHANFRSIQKSLKKNAVTYLKESDIEWSNASTYQCPDC) is integrase-type zinc finger-like. The Integrase catalytic domain occupies 656–831 (ESYEPFQYLH…AGLDITTILP (176 aa)). Mg(2+)-binding residues include Asp-667 and Asp-732. Disordered regions lie at residues 1005–1038 (GGTI…MIDL), 1057–1135 (GGTE…KSSK), 1146–1165 (LPLP…VSKD), and 1170–1205 (HSRQ…TEIE). 2 stretches are compositionally biased toward polar residues: residues 1009-1024 (ESDT…FTAR) and 1065-1082 (QRNS…STPS). Positions 1151-1165 (LTHKSPTDTSDVSKD) are enriched in basic and acidic residues. Positions 1193-1227 (KKRSLEDNETEIEVSRDTWNNKNMRSLEPPRSKKR) match the Bipartite nuclear localization signal motif. Residues 1353–1491 (NDYYITQLDI…DILGLEIKYQ (139 aa)) enclose the Reverse transcriptase Ty1/copia-type domain. Residues Asp-1361, Asp-1442, Asp-1443, Asp-1625, Glu-1667, and Asp-1700 each coordinate Mg(2+). Positions 1625–1767 (DASYGNQPYY…IKTFKLLTNK (143 aa)) constitute an RNase H Ty1/copia-type domain.

The capsid protein forms a homotrimer, from which the VLPs are assembled. The protease is a homodimer, whose active site consists of two apposed aspartic acid residues. Post-translationally, initially, virus-like particles (VLPs) are composed of the structural unprocessed proteins Gag and Gag-Pol, and also contain the host initiator methionine tRNA (tRNA(i)-Met) which serves as a primer for minus-strand DNA synthesis, and a dimer of genomic Ty RNA. Processing of the polyproteins occurs within the particle and proceeds by an ordered pathway, called maturation. First, the protease (PR) is released by autocatalytic cleavage of the Gag-Pol polyprotein, and this cleavage is a prerequisite for subsequent processing at the remaining sites to release the mature structural and catalytic proteins. Maturation takes place prior to the RT reaction and is required to produce transposition-competent VLPs.

The protein localises to the cytoplasm. It localises to the nucleus. It catalyses the reaction DNA(n) + a 2'-deoxyribonucleoside 5'-triphosphate = DNA(n+1) + diphosphate. It carries out the reaction Endonucleolytic cleavage to 5'-phosphomonoester.. Its function is as follows. Capsid protein (CA) is the structural component of the virus-like particle (VLP), forming the shell that encapsulates the retrotransposons dimeric RNA genome. The particles are assembled from trimer-clustered units and there are holes in the capsid shells that allow for the diffusion of macromolecules. CA also has nucleocapsid-like chaperone activity, promoting primer tRNA(i)-Met annealing to the multipartite primer-binding site (PBS), dimerization of Ty2 RNA and initiation of reverse transcription. The aspartyl protease (PR) mediates the proteolytic cleavages of the Gag and Gag-Pol polyproteins after assembly of the VLP. Functionally, reverse transcriptase/ribonuclease H (RT) is a multifunctional enzyme that catalyzes the conversion of the retro-elements RNA genome into dsDNA within the VLP. The enzyme displays a DNA polymerase activity that can copy either DNA or RNA templates, and a ribonuclease H (RNase H) activity that cleaves the RNA strand of RNA-DNA heteroduplexes during plus-strand synthesis and hydrolyzes RNA primers. The conversion leads to a linear dsDNA copy of the retrotransposon that includes long terminal repeats (LTRs) at both ends. In terms of biological role, integrase (IN) targets the VLP to the nucleus, where a subparticle preintegration complex (PIC) containing at least integrase and the newly synthesized dsDNA copy of the retrotransposon must transit the nuclear membrane. Once in the nucleus, integrase performs the integration of the dsDNA into the host genome. The sequence is that of Transposon Ty2-OR2 Gag-Pol polyprotein (TY2B-OR2) from Saccharomyces cerevisiae (strain ATCC 204508 / S288c) (Baker's yeast).